We begin with the raw amino-acid sequence, 279 residues long: NADPH-dependent 7-cyano-7-deazaguanine reductase (279 aa).

86-88 (IES) contacts substrate. Residue 88–89 (SK) coordinates NADPH. Cysteine 186 functions as the Thioimide intermediate in the catalytic mechanism. Aspartate 193 functions as the Proton donor in the catalytic mechanism. 225 to 226 (HE) provides a ligand contact to substrate. 254–255 (RG) serves as a coordination point for NADPH.

Belongs to the GTP cyclohydrolase I family. QueF type 2 subfamily. Homodimer.

Its subcellular location is the cytoplasm. It carries out the reaction 7-aminomethyl-7-carbaguanine + 2 NADP(+) = 7-cyano-7-deazaguanine + 2 NADPH + 3 H(+). The protein operates within tRNA modification; tRNA-queuosine biosynthesis. Catalyzes the NADPH-dependent reduction of 7-cyano-7-deazaguanine (preQ0) to 7-aminomethyl-7-deazaguanine (preQ1). The sequence is that of NADPH-dependent 7-cyano-7-deazaguanine reductase from Chromobacterium violaceum (strain ATCC 12472 / DSM 30191 / JCM 1249 / CCUG 213 / NBRC 12614 / NCIMB 9131 / NCTC 9757 / MK).